A 312-amino-acid chain; its full sequence is Ribosomal RNA small subunit methyltransferase H (312 aa).

S-adenosyl-L-methionine contacts are provided by residues 33 to 35 (AGH), D52, F79, D100, and Q107.

The protein belongs to the methyltransferase superfamily. RsmH family.

It localises to the cytoplasm. It carries out the reaction cytidine(1402) in 16S rRNA + S-adenosyl-L-methionine = N(4)-methylcytidine(1402) in 16S rRNA + S-adenosyl-L-homocysteine + H(+). Functionally, specifically methylates the N4 position of cytidine in position 1402 (C1402) of 16S rRNA. The chain is Ribosomal RNA small subunit methyltransferase H from Finegoldia magna (strain ATCC 29328 / DSM 20472 / WAL 2508) (Peptostreptococcus magnus).